A 110-amino-acid chain; its full sequence is Large ribosomal subunit protein mL60 (110 aa).

It belongs to the mitochondrion-specific ribosomal protein mL60 family. In terms of assembly, component of the mitochondrial large ribosomal subunit (mt-LSU). Mature N.crassa 74S mitochondrial ribosomes consist of a small (37S) and a large (54S) subunit. The 37S small subunit contains a 16S ribosomal RNA (16S mt-rRNA) and 32 different proteins. The 54S large subunit contains a 23S rRNA (23S mt-rRNA) and 42 different proteins.

The protein resides in the mitochondrion. Its function is as follows. Component of the mitochondrial ribosome (mitoribosome), a dedicated translation machinery responsible for the synthesis of mitochondrial genome-encoded proteins, including at least some of the essential transmembrane subunits of the mitochondrial respiratory chain. The mitoribosomes are attached to the mitochondrial inner membrane and translation products are cotranslationally integrated into the membrane. The protein is Large ribosomal subunit protein mL60 (mrpl31) of Neurospora crassa (strain ATCC 24698 / 74-OR23-1A / CBS 708.71 / DSM 1257 / FGSC 987).